The sequence spans 298 residues: Ribosomal RNA small subunit methyltransferase H (298 aa).

S-adenosyl-L-methionine contacts are provided by residues 37–39 (GGH), aspartate 57, leucine 91, aspartate 105, and glutamine 112.

It belongs to the methyltransferase superfamily. RsmH family.

The protein resides in the cytoplasm. It catalyses the reaction cytidine(1402) in 16S rRNA + S-adenosyl-L-methionine = N(4)-methylcytidine(1402) in 16S rRNA + S-adenosyl-L-homocysteine + H(+). In terms of biological role, specifically methylates the N4 position of cytidine in position 1402 (C1402) of 16S rRNA. The protein is Ribosomal RNA small subunit methyltransferase H of Kosmotoga olearia (strain ATCC BAA-1733 / DSM 21960 / TBF 19.5.1).